Here is a 455-residue protein sequence, read N- to C-terminus: Probable glycine dehydrogenase (decarboxylating) subunit 1 (455 aa).

The protein belongs to the GcvP family. N-terminal subunit subfamily. As to quaternary structure, the glycine cleavage system is composed of four proteins: P, T, L and H. In this organism, the P 'protein' is a heterodimer of two subunits.

The catalysed reaction is N(6)-[(R)-lipoyl]-L-lysyl-[glycine-cleavage complex H protein] + glycine + H(+) = N(6)-[(R)-S(8)-aminomethyldihydrolipoyl]-L-lysyl-[glycine-cleavage complex H protein] + CO2. In terms of biological role, the glycine cleavage system catalyzes the degradation of glycine. The P protein binds the alpha-amino group of glycine through its pyridoxal phosphate cofactor; CO(2) is released and the remaining methylamine moiety is then transferred to the lipoamide cofactor of the H protein. The polypeptide is Probable glycine dehydrogenase (decarboxylating) subunit 1 (Francisella philomiragia subsp. philomiragia (strain ATCC 25017 / CCUG 19701 / FSC 153 / O#319-036)).